Consider the following 337-residue polypeptide: Anthranilate phosphoribosyltransferase (337 aa).

Residues Gly-81, 84-85 (GD), Ser-89, 91-94 (NVST), 109-117 (KHGNRALSS), and Ala-121 each bind 5-phospho-alpha-D-ribose 1-diphosphate. Residue Gly-81 participates in anthranilate binding. Position 93 (Ser-93) interacts with Mg(2+). Asn-112 provides a ligand contact to anthranilate. Arg-167 is a binding site for anthranilate. Residues Asp-226 and Glu-227 each coordinate Mg(2+).

It belongs to the anthranilate phosphoribosyltransferase family. Homodimer. It depends on Mg(2+) as a cofactor.

The catalysed reaction is N-(5-phospho-beta-D-ribosyl)anthranilate + diphosphate = 5-phospho-alpha-D-ribose 1-diphosphate + anthranilate. The protein operates within amino-acid biosynthesis; L-tryptophan biosynthesis; L-tryptophan from chorismate: step 2/5. Its function is as follows. Catalyzes the transfer of the phosphoribosyl group of 5-phosphorylribose-1-pyrophosphate (PRPP) to anthranilate to yield N-(5'-phosphoribosyl)-anthranilate (PRA). In Bradyrhizobium sp. (strain ORS 278), this protein is Anthranilate phosphoribosyltransferase.